A 477-amino-acid polypeptide reads, in one-letter code: Ribosomal RNA small subunit methyltransferase F (477 aa).

S-adenosyl-L-methionine-binding positions include Ala125–Lys131, Glu149, Asp176, and Asp194. The active-site Nucleophile is the Cys247.

The protein belongs to the class I-like SAM-binding methyltransferase superfamily. RsmB/NOP family.

Its subcellular location is the cytoplasm. It catalyses the reaction cytidine(1407) in 16S rRNA + S-adenosyl-L-methionine = 5-methylcytidine(1407) in 16S rRNA + S-adenosyl-L-homocysteine + H(+). In terms of biological role, specifically methylates the cytosine at position 1407 (m5C1407) of 16S rRNA. This chain is Ribosomal RNA small subunit methyltransferase F, found in Klebsiella pneumoniae (strain 342).